Consider the following 445-residue polypeptide: T-box transcription factor TBX20 (445 aa).

Positions 108–287 (LWDKFHELGT…SNPFAKGFRD (180 aa)) form a DNA-binding region, T-box. The segment at 318-337 (EEDVLGEESQTTQSRGSAFT) is disordered. Positions 325-337 (ESQTTQSRGSAFT) are enriched in polar residues.

In terms of tissue distribution, prominently expressed in the extraembryonic mesoderm, developing heart, eye analage and motor neurons of hindbrain and spinal cord. Expressed in extraembryonic tissues such as the amnion and allantois.

The protein localises to the nucleus. Acts as a transcriptional activator and repressor required for cardiac development and may have key roles in the maintenance of functional and structural phenotypes in adult heart. This chain is T-box transcription factor TBX20 (Tbx20), found in Mus musculus (Mouse).